Here is a 206-residue protein sequence, read N- to C-terminus: Ribosomal RNA small subunit methyltransferase G (206 aa).

S-adenosyl-L-methionine is bound by residues G74, L79, 125–126 (VE), and R140.

This sequence belongs to the methyltransferase superfamily. RNA methyltransferase RsmG family.

Its subcellular location is the cytoplasm. The enzyme catalyses guanosine(527) in 16S rRNA + S-adenosyl-L-methionine = N(7)-methylguanosine(527) in 16S rRNA + S-adenosyl-L-homocysteine. Specifically methylates the N7 position of guanine in position 527 of 16S rRNA. The polypeptide is Ribosomal RNA small subunit methyltransferase G (Shewanella woodyi (strain ATCC 51908 / MS32)).